The primary structure comprises 115 residues: Large ribosomal subunit protein bL20 (115 aa).

The protein belongs to the bacterial ribosomal protein bL20 family.

In terms of biological role, binds directly to 23S ribosomal RNA and is necessary for the in vitro assembly process of the 50S ribosomal subunit. It is not involved in the protein synthesizing functions of that subunit. The protein is Large ribosomal subunit protein bL20 (rplT) of Borreliella burgdorferi (strain ATCC 35210 / DSM 4680 / CIP 102532 / B31) (Borrelia burgdorferi).